The chain runs to 418 residues: Glutamyl-tRNA reductase (418 aa).

Residues 49–52 (TCNR), serine 109, 114–116 (EPQ), and glutamine 120 contribute to the substrate site. Cysteine 50 serves as the catalytic Nucleophile. Position 189–194 (189–194 (GAGETI)) interacts with NADP(+).

The protein belongs to the glutamyl-tRNA reductase family. As to quaternary structure, homodimer.

The enzyme catalyses (S)-4-amino-5-oxopentanoate + tRNA(Glu) + NADP(+) = L-glutamyl-tRNA(Glu) + NADPH + H(+). The protein operates within porphyrin-containing compound metabolism; protoporphyrin-IX biosynthesis; 5-aminolevulinate from L-glutamyl-tRNA(Glu): step 1/2. Its function is as follows. Catalyzes the NADPH-dependent reduction of glutamyl-tRNA(Glu) to glutamate 1-semialdehyde (GSA). The chain is Glutamyl-tRNA reductase from Salmonella choleraesuis (strain SC-B67).